A 296-amino-acid chain; its full sequence is dTDP-rhamnosyl transferase RfbF (296 aa).

Belongs to the glycosyltransferase 2 family.

Its pathway is bacterial outer membrane biogenesis; lipopolysaccharide biosynthesis. This is dTDP-rhamnosyl transferase RfbF (rfbF) from Shigella flexneri.